We begin with the raw amino-acid sequence, 247 residues long: UPF0280 protein Mevan_0550 (247 aa).

The protein belongs to the UPF0280 family.

The chain is UPF0280 protein Mevan_0550 from Methanococcus vannielii (strain ATCC 35089 / DSM 1224 / JCM 13029 / OCM 148 / SB).